A 425-amino-acid polypeptide reads, in one-letter code: Endoplasmic reticulum junction formation protein lunapark (425 aa).

Glycine 2 carries N-myristoyl glycine lipidation. Residues 2–45 (GGLFSRWRAKPSTVEVLENIDKEIQALEEFREKNQRLQKLWVGR) lie on the Cytoplasmic side of the membrane. The stretch at 15 to 41 (VEVLENIDKEIQALEEFREKNQRLQKL) forms a coiled coil. The helical transmembrane segment at 46-66 (LIIYSSILYLFTCLIVYLWYL) threads the bilayer. At 67–77 (PDEFTARLVMT) the chain is on the lumenal side. The chain crosses the membrane as a helical span at residues 78–98 (LPFFAFPLIIWTLRTVLIFFF). Over 99–425 (SKRTERNNEA…EPSEESLVTK (327 aa)) the chain is Cytoplasmic. Residues 101–128 (RTERNNEALDDLKSQKKKILEEVMEKET) are a coiled coil. Phosphoserine occurs at positions 114, 153, 177, 182, and 194. Positions 144 to 242 (KKAKEFEPPS…HPPGPPLARP (99 aa)) are disordered. Residues 186 to 195 (GPPPQGPVSP) are compositionally biased toward pro residues. A Phosphothreonine modification is found at threonine 211. A Phosphoserine modification is found at serine 222. The segment at 271–296 (CQQCFSHNGMALKEEFEYIAFRCAYC) adopts a C4-type; plays a role in ER morphology zinc-finger fold. A phosphoserine mark is found at serine 316, serine 348, and serine 380. The disordered stretch occupies residues 320–425 (RQAVEGSSST…EPSEESLVTK (106 aa)). The span at 384–398 (EPAENQEETENEETS) shows a compositional bias: acidic residues. Position 411 is a phosphoserine (serine 411).

It belongs to the lunapark family. Homodimer; homodimerization requires the C4-type zinc finger motif and decreases during mitosis in a phosphorylation-dependent manner. In terms of processing, myristoylated; myristoylation is necessary for the endoplasmic reticulum (ER) three-way ER tubular junction formation, but is not required neither for membrane translocation, membrane topology formation, nor for the specific localization to ER membranes. Phosphorylated. Phosphorylation occurs at Ser-177, Ser-182, Ser-222, Ser-316 and Ser-380 during interphase. Phosphorylation occurs at Ser-114, Ser-153, Ser-194, Thr-211 and Ser-348 during mitosis; these phosphorylations reduce both its homodimerization and the ER three-way tubular junction formation. Post-translationally, subject to proteasomal degradation following phosphorylation during mitosis. As to expression, expressed in most tissues at basal level, with reinforcement in distal limb buds, genital bud, and in parts of the central nervous system.

Its subcellular location is the endoplasmic reticulum membrane. Its function is as follows. Endoplasmic reticulum (ER)-shaping membrane protein that plays a role in determining ER morphology. Involved in the stabilization of nascent three-way ER tubular junctions within the ER network. May also play a role as a curvature-stabilizing protein within three-way ER tubular junction network. May be involved in limb and central nervous system development. This is Endoplasmic reticulum junction formation protein lunapark from Mus musculus (Mouse).